Here is an 859-residue protein sequence, read N- to C-terminus: Protein EFR3 homolog (859 aa).

The span at 696–714 (RKNDGSGDQWQNDTPNFDS) shows a compositional bias: polar residues. Residues 696–728 (RKNDGSGDQWQNDTPNFDSTDGRESPSGYKTVG) are disordered.

This sequence belongs to the EFR3 family.

This Caenorhabditis elegans protein is Protein EFR3 homolog.